The sequence spans 293 residues: Ribosomal protein L11 methyltransferase (293 aa).

S-adenosyl-L-methionine-binding residues include Thr145, Gly166, Asp188, and Asn230.

Belongs to the methyltransferase superfamily. PrmA family.

Its subcellular location is the cytoplasm. It catalyses the reaction L-lysyl-[protein] + 3 S-adenosyl-L-methionine = N(6),N(6),N(6)-trimethyl-L-lysyl-[protein] + 3 S-adenosyl-L-homocysteine + 3 H(+). In terms of biological role, methylates ribosomal protein L11. This chain is Ribosomal protein L11 methyltransferase, found in Citrobacter koseri (strain ATCC BAA-895 / CDC 4225-83 / SGSC4696).